We begin with the raw amino-acid sequence, 555 residues long: La-related protein 7 (555 aa).

Positions 36–127 (RSRVKQLLSD…RRKEPLGETP (92 aa)) constitute an HTH La-type RNA-binding domain. Positions 133–211 (RTVYVELLPK…PRKPGIFPKT (79 aa)) constitute an RRM domain. The tract at residues 218-327 (PFDAVTQDND…ENKDEELNSL (110 aa)) is disordered. Polar residues-rich tracts occupy residues 238-251 (KNST…NNMD), 258-274 (STVT…STVS), and 284-293 (SQSFEASSGE). A coiled-coil region spans residues 295-356 (QFEMSSKMRK…ERLKVGEEVI (62 aa)). A compositionally biased stretch (basic and acidic residues) spans 303–327 (RKVEEEKSELKDLSSENKDEELNSL). One can recognise a xRRM domain in the interval 425–538 (EFLSGVIVKI…TEKLISKAEK (114 aa)).

This sequence belongs to the LARP7 family. In terms of assembly, core component of the 7SK RNP complex. Associates with box C/D small nucleolar ribonucleoprotein (snoRNP) complexes.

The protein localises to the nucleus. It is found in the nucleoplasm. RNA-binding protein that specifically binds distinct small nuclear RNA (snRNAs) and regulates their processing and function. Specifically binds the 7SK snRNA (7SK RNA) and acts as a core component of the 7SK ribonucleoprotein (RNP) complex, thereby acting as a negative regulator of transcription elongation by RNA polymerase II. The 7SK RNP complex sequesters the positive transcription elongation factor b (P-TEFb) in a large inactive 7SK RNP complex preventing RNA polymerase II phosphorylation and subsequent transcriptional elongation. The 7SK RNP complex also promotes snRNA gene transcription by RNA polymerase II via interaction with the little elongation complex (LEC). LARP7 specifically binds to the highly conserved 3'-terminal U-rich stretch of 7SK RNA; on stimulation, remains associated with 7SK RNA, whereas P-TEFb is released from the complex. LARP7 also acts as a regulator of mRNA splicing fidelity by promoting U6 snRNA processing. Specifically binds U6 snRNAs and associates with a subset of box C/D RNP complexes: promotes U6 snRNA 2'-O-methylation by facilitating U6 snRNA loading into box C/D RNP complexes. U6 snRNA 2'-O-methylation is required for mRNA splicing fidelity. This chain is La-related protein 7, found in Danio rerio (Zebrafish).